We begin with the raw amino-acid sequence, 362 residues long: Phosphoserine aminotransferase (362 aa).

L-glutamate is bound at residue R43. Pyridoxal 5'-phosphate-binding positions include 77–78, W103, T153, D173, and Q196; that span reads AS. K197 carries the post-translational modification N6-(pyridoxal phosphate)lysine. Residue 238 to 239 coordinates pyridoxal 5'-phosphate; it reads NT.

It belongs to the class-V pyridoxal-phosphate-dependent aminotransferase family. SerC subfamily. As to quaternary structure, homodimer. Pyridoxal 5'-phosphate is required as a cofactor.

It is found in the cytoplasm. It catalyses the reaction O-phospho-L-serine + 2-oxoglutarate = 3-phosphooxypyruvate + L-glutamate. It carries out the reaction 4-(phosphooxy)-L-threonine + 2-oxoglutarate = (R)-3-hydroxy-2-oxo-4-phosphooxybutanoate + L-glutamate. It participates in amino-acid biosynthesis; L-serine biosynthesis; L-serine from 3-phospho-D-glycerate: step 2/3. It functions in the pathway cofactor biosynthesis; pyridoxine 5'-phosphate biosynthesis; pyridoxine 5'-phosphate from D-erythrose 4-phosphate: step 3/5. Its function is as follows. Catalyzes the reversible conversion of 3-phosphohydroxypyruvate to phosphoserine and of 3-hydroxy-2-oxo-4-phosphonooxybutanoate to phosphohydroxythreonine. This is Phosphoserine aminotransferase (serC) from Niallia circulans (Bacillus circulans).